A 312-amino-acid chain; its full sequence is Ribosomal protein L11 methyltransferase (312 aa).

S-adenosyl-L-methionine-binding residues include Thr163, Gly184, Asp206, and Asn248.

The protein belongs to the methyltransferase superfamily. PrmA family.

Its subcellular location is the cytoplasm. It catalyses the reaction L-lysyl-[protein] + 3 S-adenosyl-L-methionine = N(6),N(6),N(6)-trimethyl-L-lysyl-[protein] + 3 S-adenosyl-L-homocysteine + 3 H(+). Functionally, methylates ribosomal protein L11. In Clostridium botulinum (strain Loch Maree / Type A3), this protein is Ribosomal protein L11 methyltransferase.